Here is a 672-residue protein sequence, read N- to C-terminus: Spermatid perinuclear RNA-binding protein (672 aa).

In terms of domain architecture, DZF spans 5-363; it reads RSFANDDRHV…ALKRPFEDGL (359 aa). Disordered stretches follow at residues 52 to 73 and 349 to 371; these read TNKG…GENY and GAGS…DPNK. Over residues 357–371 the composition is skewed to basic and acidic residues; that stretch reads RPFEDGLGDDKDPNK. In terms of domain architecture, DRBM 1 spans 387–453; that stretch reads DLMNALMRLN…AVKVLQAMGY (67 aa). A compositionally biased stretch (basic and acidic residues) spans 466–476; that stretch reads SDEKSDNESKN. A disordered region spans residues 466–499; it reads SDEKSDNESKNETVSSNSSNNTGNSTTETSSTLE. Low complexity predominate over residues 477–497; that stretch reads ETVSSNSSNNTGNSTTETSST. Residues 510-576 form the DRBM 2 domain; that stretch reads SGKNPVMELN…ALAALEKLFS (67 aa). Residues arginine 612 and arginine 617 each carry the asymmetric dimethylarginine modification.

In terms of assembly, interacts with EIF2AK2. Associates with microtubules; it is unsure whether such interaction is direct or indirect.

The protein localises to the cytoplasm. Functionally, involved in spermatogenesis and sperm function. Plays a role in regulation of cell growth. Binds to double-stranded DNA and RNA. Binds most efficiently to poly(I:C) RNA than to poly(dI:dC) DNA. Binds also to single-stranded poly(G) RNA. Binds non-specifically to the mRNA PRM1 3'-UTR and adenovirus VA RNA. The protein is Spermatid perinuclear RNA-binding protein (STRBP) of Homo sapiens (Human).